The chain runs to 470 residues: Ribosomal protein uS12 methylthiotransferase RimO (470 aa).

In terms of domain architecture, MTTase N-terminal spans Thr4 to Ala120. Residues Cys13, Cys49, Cys83, Cys155, Cys159, and Cys162 each contribute to the [4Fe-4S] cluster site. Positions Ser141–Glu371 constitute a Radical SAM core domain. The region spanning Arg374 to Ala442 is the TRAM domain. The tract at residues Arg447–Gly470 is disordered.

This sequence belongs to the methylthiotransferase family. RimO subfamily. It depends on [4Fe-4S] cluster as a cofactor.

The protein localises to the cytoplasm. It catalyses the reaction L-aspartate(89)-[ribosomal protein uS12]-hydrogen + (sulfur carrier)-SH + AH2 + 2 S-adenosyl-L-methionine = 3-methylsulfanyl-L-aspartate(89)-[ribosomal protein uS12]-hydrogen + (sulfur carrier)-H + 5'-deoxyadenosine + L-methionine + A + S-adenosyl-L-homocysteine + 2 H(+). Its function is as follows. Catalyzes the methylthiolation of an aspartic acid residue of ribosomal protein uS12. The chain is Ribosomal protein uS12 methylthiotransferase RimO from Anaeromyxobacter sp. (strain Fw109-5).